We begin with the raw amino-acid sequence, 302 residues long: 4-hydroxy-tetrahydrodipicolinate synthase (302 aa).

Residue Thr55 participates in pyruvate binding. Tyr144 (proton donor/acceptor) is an active-site residue. Lys172 functions as the Schiff-base intermediate with substrate in the catalytic mechanism. Val214 provides a ligand contact to pyruvate.

This sequence belongs to the DapA family. In terms of assembly, homotetramer; dimer of dimers.

It localises to the cytoplasm. It catalyses the reaction L-aspartate 4-semialdehyde + pyruvate = (2S,4S)-4-hydroxy-2,3,4,5-tetrahydrodipicolinate + H2O + H(+). It functions in the pathway amino-acid biosynthesis; L-lysine biosynthesis via DAP pathway; (S)-tetrahydrodipicolinate from L-aspartate: step 3/4. Catalyzes the condensation of (S)-aspartate-beta-semialdehyde [(S)-ASA] and pyruvate to 4-hydroxy-tetrahydrodipicolinate (HTPA). The chain is 4-hydroxy-tetrahydrodipicolinate synthase from Prochlorococcus marinus (strain MIT 9313).